Reading from the N-terminus, the 103-residue chain is Large ribosomal subunit protein bL21 (103 aa).

Belongs to the bacterial ribosomal protein bL21 family. As to quaternary structure, part of the 50S ribosomal subunit. Contacts protein L20.

Its function is as follows. This protein binds to 23S rRNA in the presence of protein L20. The sequence is that of Large ribosomal subunit protein bL21 from Heliobacterium modesticaldum (strain ATCC 51547 / Ice1).